Reading from the N-terminus, the 1158-residue chain is Hephaestin (1158 aa).

Positions Met1–Gly23 are cleaved as a signal peptide. Plastocyanin-like domains lie at Ala24–Cys206, Gln218–Cys366, Pro370–Cys560, Lys570–Cys718, Ala731–Cys903, and His911–Glu1067. Residues Ala24 to Ser1110 are Extracellular-facing. The Na(+) site is built by Gly70 and Tyr73. Cu(2+) is bound by residues His126 and His128. His126 is an O2 binding site. Residues Lys134, Asp152, and Asp153 each coordinate Ca(2+). A glycan (N-linked (GlcNAc...) asparagine) is linked at Asn164. Cys180 and Cys206 form a disulfide bridge. The Cu(2+) site is built by His186 and His188. His186 provides a ligand contact to O2. Residue Asn236 is glycosylated (N-linked (GlcNAc...) asparagine). Ser265 contacts Na(+). An intrachain disulfide couples Cys285 to Cys366. Residues His304, Cys347, and His352 each contribute to the Cu(2+) site. Na(+)-binding residues include Phe416, Gly425, and Tyr428. A disulfide bond links Cys534 and Cys560. Asn588 carries N-linked (GlcNAc...) asparagine glycosylation. Residue Ser617 coordinates Na(+). A disulfide bond links Cys637 and Cys718. The Cu(2+) site is built by His656, Cys699, His704, and Met709. Asn714 and Asn758 each carry an N-linked (GlcNAc...) asparagine glycan. Na(+) contacts are provided by Phe769 and Gly778. Asn829 and Asn873 each carry an N-linked (GlcNAc...) asparagine glycan. Cys877 and Cys903 are joined by a disulfide. A glycan (N-linked (GlcNAc...) asparagine) is linked at Asn931. 8 residues coordinate Cu(2+): His1000, His1003, His1005, His1045, Cys1046, His1047, His1051, and Met1056. His1003 and His1005 together coordinate O2. His1047 contributes to the O2 binding site. A helical membrane pass occupies residues Val1111–Trp1131. The Cytoplasmic segment spans residues Tyr1132–Gln1158. Ser1145, Ser1150, and Ser1155 each carry phosphoserine.

This sequence belongs to the multicopper oxidase family. Part of a complex composed of SLC40A1/ferroportin, TF/transferrin and HEPH/hephaestin that transfers iron from cells to transferrin. Cu cation is required as a cofactor. Expressed by intestinal absorptive cells (at protein level). Also detected in breast, colon, bone trabecular cells and fibroblasts.

It localises to the basolateral cell membrane. The catalysed reaction is 4 Fe(2+) + O2 + 4 H(+) = 4 Fe(3+) + 2 H2O. Plasma membrane ferroxidase that mediates the extracellular conversion of ferrous/Fe(2+) iron into its ferric/Fe(3+) form. Couples ferroportin which specifically exports ferrous/Fe(2+) iron from cells to transferrin that only binds and shuttles extracellular ferric/Fe(3+) iron throughout the body. By helping iron transfer from cells to blood mainly contributes to dietary iron absorption by the intestinal epithelium and more generally regulates iron levels in the body. The protein is Hephaestin of Homo sapiens (Human).